The following is a 95-amino-acid chain: Aspartyl/glutamyl-tRNA(Asn/Gln) amidotransferase subunit C (95 aa).

The protein belongs to the GatC family. As to quaternary structure, heterotrimer of A, B and C subunits.

The enzyme catalyses L-glutamyl-tRNA(Gln) + L-glutamine + ATP + H2O = L-glutaminyl-tRNA(Gln) + L-glutamate + ADP + phosphate + H(+). The catalysed reaction is L-aspartyl-tRNA(Asn) + L-glutamine + ATP + H2O = L-asparaginyl-tRNA(Asn) + L-glutamate + ADP + phosphate + 2 H(+). In terms of biological role, allows the formation of correctly charged Asn-tRNA(Asn) or Gln-tRNA(Gln) through the transamidation of misacylated Asp-tRNA(Asn) or Glu-tRNA(Gln) in organisms which lack either or both of asparaginyl-tRNA or glutaminyl-tRNA synthetases. The reaction takes place in the presence of glutamine and ATP through an activated phospho-Asp-tRNA(Asn) or phospho-Glu-tRNA(Gln). The sequence is that of Aspartyl/glutamyl-tRNA(Asn/Gln) amidotransferase subunit C from Beijerinckia indica subsp. indica (strain ATCC 9039 / DSM 1715 / NCIMB 8712).